The sequence spans 368 residues: Saccharopine dehydrogenase [NAD(+), L-lysine-forming] (368 aa).

The L-saccharopine site is built by arginine 18 and lysine 77. Residue lysine 77 is the Proton acceptor of the active site. At serine 85 the chain carries Phosphoserine. Histidine 96 acts as the Proton donor in catalysis. Residue glutamine 101 coordinates L-saccharopine. Arginine 130 is an NAD(+) binding site. Residues arginine 131 and phenylalanine 135 each coordinate L-saccharopine. NAD(+)-binding positions include glycine 203 to arginine 204, aspartate 227, threonine 231, tyrosine 251, and valine 278. The cysteines at positions 205 and 249 are disulfide-linked. Serine 279–aspartate 281 contributes to the L-saccharopine binding site. Isoleucine 319–leucine 322 contributes to the NAD(+) binding site.

Belongs to the AlaDH/PNT family. In terms of assembly, monomer.

It carries out the reaction L-saccharopine + NAD(+) + H2O = L-lysine + 2-oxoglutarate + NADH + H(+). It participates in amino-acid biosynthesis; L-lysine biosynthesis via AAA pathway; L-lysine from L-alpha-aminoadipate (fungal route): step 3/3. In terms of biological role, catalyzes the NAD(+)-dependent cleavage of saccharopine to L-lysine and 2-oxoglutarate, the final step in the alpha-aminoadipate (AAA) pathway for lysin biosynthesis. The protein is Saccharopine dehydrogenase [NAD(+), L-lysine-forming] of Schizosaccharomyces pombe (strain 972 / ATCC 24843) (Fission yeast).